A 548-amino-acid chain; its full sequence is CTP synthase (548 aa).

The amidoligase domain stretch occupies residues 1 to 266; that stretch reads MRVNYIFVTG…DNYICKRFNL (266 aa). Residue Ser-14 coordinates CTP. Ser-14 contributes to the UTP binding site. ATP is bound by residues 15 to 20 and Asp-72; that span reads SLGKGI. Residues Asp-72 and Glu-140 each contribute to the Mg(2+) site. CTP contacts are provided by residues 147–149, 187–192, and Lys-223; these read DIE and KTKPTQ. Residues 187-192 and Lys-223 contribute to the UTP site; that span reads KTKPTQ. A Glutamine amidotransferase type-1 domain is found at 291–543; it reads TVGMVGKYIE…IKAAIEYQHR (253 aa). Gly-353 is an L-glutamine binding site. Catalysis depends on Cys-380, which acts as the Nucleophile; for glutamine hydrolysis. L-glutamine is bound by residues 381 to 384, Glu-404, and Arg-471; that span reads LGMQ. Catalysis depends on residues His-516 and Glu-518.

This sequence belongs to the CTP synthase family. In terms of assembly, homotetramer.

It carries out the reaction UTP + L-glutamine + ATP + H2O = CTP + L-glutamate + ADP + phosphate + 2 H(+). The enzyme catalyses L-glutamine + H2O = L-glutamate + NH4(+). The catalysed reaction is UTP + NH4(+) + ATP = CTP + ADP + phosphate + 2 H(+). Its pathway is pyrimidine metabolism; CTP biosynthesis via de novo pathway; CTP from UDP: step 2/2. Allosterically activated by GTP, when glutamine is the substrate; GTP has no effect on the reaction when ammonia is the substrate. The allosteric effector GTP functions by stabilizing the protein conformation that binds the tetrahedral intermediate(s) formed during glutamine hydrolysis. Inhibited by the product CTP, via allosteric rather than competitive inhibition. Functionally, catalyzes the ATP-dependent amination of UTP to CTP with either L-glutamine or ammonia as the source of nitrogen. Regulates intracellular CTP levels through interactions with the four ribonucleotide triphosphates. This Blochmanniella pennsylvanica (strain BPEN) protein is CTP synthase.